We begin with the raw amino-acid sequence, 200 residues long: BREX protein BrxA (200 aa).

The protein belongs to the BrxA family.

In terms of biological role, BREX systems (bacteriophage exclusion) provide immunity against bacteriophage. Part of a type 1 BREX system. This system allows phage adsorption but prevents phage DNA replication, without degradation of the phage DNA. Methylation of bacterial DNA by PglX probably guides self/non-self discrimination. When the brxA-brxB-brxC-pglX and pglZ-brxL operons are transformed into a susceptible B.subtilis strain (BEST7003) they confer resistance to bacteriophages SPbeta, SP16, Zeta, phi3T and SP02 and partial protection to phages SP01 and SP82G (these include lytic and temperate phage). They do not protect against phages phi105, rho10 or rho14. Additionally confers a very slight reduction in efficiency of plasmid transformation. The sequence is that of BREX protein BrxA from Bacillus cereus (strain H3081.97).